The primary structure comprises 200 residues: Holliday junction branch migration complex subunit RuvA (200 aa).

Positions 1-63 (MIGKLSGKID…EEHIHLYGFL (63 aa)) are domain I. Positions 64–142 (TLEEKNFFNL…KIFSSSAIIK (79 aa)) are domain II. A flexible linker region spans residues 142 to 146 (KDSSN). The domain III stretch occupies residues 147 to 200 (ISSVEINEVIKALVNLGFTRFEAQNTVQGIITQNTKISIDELIKTALKNRNSSF).

The protein belongs to the RuvA family. Homotetramer. Forms an RuvA(8)-RuvB(12)-Holliday junction (HJ) complex. HJ DNA is sandwiched between 2 RuvA tetramers; dsDNA enters through RuvA and exits via RuvB. An RuvB hexamer assembles on each DNA strand where it exits the tetramer. Each RuvB hexamer is contacted by two RuvA subunits (via domain III) on 2 adjacent RuvB subunits; this complex drives branch migration. In the full resolvosome a probable DNA-RuvA(4)-RuvB(12)-RuvC(2) complex forms which resolves the HJ.

Its subcellular location is the cytoplasm. In terms of biological role, the RuvA-RuvB-RuvC complex processes Holliday junction (HJ) DNA during genetic recombination and DNA repair, while the RuvA-RuvB complex plays an important role in the rescue of blocked DNA replication forks via replication fork reversal (RFR). RuvA specifically binds to HJ cruciform DNA, conferring on it an open structure. The RuvB hexamer acts as an ATP-dependent pump, pulling dsDNA into and through the RuvAB complex. HJ branch migration allows RuvC to scan DNA until it finds its consensus sequence, where it cleaves and resolves the cruciform DNA. This is Holliday junction branch migration complex subunit RuvA from Rickettsia typhi (strain ATCC VR-144 / Wilmington).